The primary structure comprises 513 residues: Flavonoid 3',5'-hydroxylase (513 aa).

Position 446 (cysteine 446) interacts with heme.

It belongs to the cytochrome P450 family. Heme serves as cofactor. Hypocotyl tissues.

It carries out the reaction a 3',5'-unsubstituted flavanone + 2 reduced [NADPH--hemoprotein reductase] + 2 O2 = a 3',5'-dihydroxyflavanone + 2 oxidized [NADPH--hemoprotein reductase] + 2 H2O + 2 H(+). It participates in pigment biosynthesis; anthocyanin biosynthesis. In terms of biological role, catalyzes the 3'5'-hydroxylation of naringenin and eriodictyol to form 5,7,3,'4',5'-pentahydroxyflavanone and 3',5'-hydroxylation of dihydrokaempferol and dihydroquercetin to form dihydromyricetin. This chain is Flavonoid 3',5'-hydroxylase (CYP75A2), found in Solanum melongena (Eggplant).